We begin with the raw amino-acid sequence, 131 residues long: Small ribosomal subunit protein uS8 (131 aa).

The protein belongs to the universal ribosomal protein uS8 family. As to quaternary structure, part of the 30S ribosomal subunit. Contacts proteins S5 and S12.

Functionally, one of the primary rRNA binding proteins, it binds directly to 16S rRNA central domain where it helps coordinate assembly of the platform of the 30S subunit. The sequence is that of Small ribosomal subunit protein uS8 from Burkholderia mallei (strain NCTC 10247).